Here is a 284-residue protein sequence, read N- to C-terminus: Origin of replication complex subunit 6 (284 aa).

Belongs to the ORC6 family. Component of the origin recognition complex (ORC) composed of at least ORC1 (ORC1A or ORC1B), ORC2, ORC3, ORC4, ORC5 and ORC6. ORC is regulated in a cell-cycle and development dependent manner. It is sequentially assembled at the exit from anaphase of mitosis and disassembled as cells enter S phase. Interacts directly with ORC2, ORC3, ORC4 and ORC5. In terms of tissue distribution, follow a cell-cycle regulation with a peak at the G1/S-phase. Mostly expressed in siliques, flowers, flower buds and mature leaves, and, to a lower exent, in roots, leaves and stems.

Its subcellular location is the nucleus. Its function is as follows. Component of the origin recognition complex (ORC) that binds origins of replication. DNA-binding is ATP-dependent. The specific DNA sequences that define origins of replication have not been identified yet. ORC is required to assemble the pre-replication complex necessary to initiate DNA replication. In Arabidopsis thaliana (Mouse-ear cress), this protein is Origin of replication complex subunit 6.